A 322-amino-acid chain; its full sequence is Tyrosine recombinase XerC (322 aa).

The tract at residues 1-25 (MPEAAPPVADARGSSPTATTGPGAD) is disordered. Over residues 16–25 (PTATTGPGAD) the composition is skewed to low complexity. The region spanning 25–111 (DATLSAVEPF…ACRSYYAWLL (87 aa)) is the Core-binding (CB) domain. The region spanning 132–309 (KLPQVLDADE…DFQHLAKVYD (178 aa)) is the Tyr recombinase domain. Residues arginine 171, lysine 195, histidine 261, arginine 264, and histidine 287 contribute to the active site. Residue tyrosine 296 is the O-(3'-phospho-DNA)-tyrosine intermediate of the active site.

It belongs to the 'phage' integrase family. XerC subfamily. As to quaternary structure, forms a cyclic heterotetrameric complex composed of two molecules of XerC and two molecules of XerD.

The protein localises to the cytoplasm. Site-specific tyrosine recombinase, which acts by catalyzing the cutting and rejoining of the recombining DNA molecules. The XerC-XerD complex is essential to convert dimers of the bacterial chromosome into monomers to permit their segregation at cell division. It also contributes to the segregational stability of plasmids. The sequence is that of Tyrosine recombinase XerC from Xanthomonas campestris pv. campestris (strain 8004).